We begin with the raw amino-acid sequence, 369 residues long: ATP-dependent (S)-NAD(P)H-hydrate dehydratase (369 aa).

Positions leucine 14–leucine 356 constitute a YjeF C-terminal domain. (6S)-NADPHX contacts are provided by residues glycine 126 and asparagine 179–arginine 185. ATP is bound by residues lysine 231–aspartate 235 and glycine 250–glycine 259. Aspartate 260 contributes to the (6S)-NADPHX binding site. Basic and acidic residues predominate over residues glycine 284–lysine 306. Residues glycine 284–arginine 307 are disordered.

Belongs to the NnrD/CARKD family. It depends on Mg(2+) as a cofactor.

It localises to the cytoplasm. The enzyme catalyses (6S)-NADHX + ATP = ADP + phosphate + NADH + H(+). It carries out the reaction (6S)-NADPHX + ATP = ADP + phosphate + NADPH + H(+). Its function is as follows. Catalyzes the dehydration of the S-form of NAD(P)HX at the expense of ATP, which is converted to ADP. Together with NAD(P)HX epimerase, which catalyzes the epimerization of the S- and R-forms, the enzyme allows the repair of both epimers of NAD(P)HX, a damaged form of NAD(P)H that is a result of enzymatic or heat-dependent hydration. The sequence is that of ATP-dependent (S)-NAD(P)H-hydrate dehydratase from Emericella nidulans (strain FGSC A4 / ATCC 38163 / CBS 112.46 / NRRL 194 / M139) (Aspergillus nidulans).